Reading from the N-terminus, the 141-residue chain is Large ribosomal subunit protein uL11c (141 aa).

This sequence belongs to the universal ribosomal protein uL11 family. In terms of assembly, part of the ribosomal stalk of the 50S ribosomal subunit. Interacts with L10 and the large rRNA to form the base of the stalk. L10 forms an elongated spine to which L12 dimers bind in a sequential fashion forming a multimeric L10(L12)X complex.

The protein resides in the plastid. The protein localises to the chloroplast. Forms part of the ribosomal stalk which helps the ribosome interact with GTP-bound translation factors. The chain is Large ribosomal subunit protein uL11c from Trieres chinensis (Marine centric diatom).